A 215-amino-acid polypeptide reads, in one-letter code: Small ribosomal subunit protein uS7 (215 aa).

The protein belongs to the universal ribosomal protein uS7 family. In terms of assembly, part of the 30S ribosomal subunit.

Functionally, one of the primary rRNA binding proteins, it binds directly to 16S rRNA where it nucleates assembly of the head domain of the 30S subunit. Is located at the subunit interface close to the decoding center. In Pyrococcus abyssi (strain GE5 / Orsay), this protein is Small ribosomal subunit protein uS7.